We begin with the raw amino-acid sequence, 306 residues long: UDP-N-acetylenolpyruvoylglucosamine reductase (306 aa).

The FAD-binding PCMH-type domain occupies 34-198 (VGGPADLLIT…LEVTFKLHNS (165 aa)). Arg177 is an active-site residue. The active-site Proton donor is Ser227. Glu297 is an active-site residue.

This sequence belongs to the MurB family. It depends on FAD as a cofactor.

The protein localises to the cytoplasm. It carries out the reaction UDP-N-acetyl-alpha-D-muramate + NADP(+) = UDP-N-acetyl-3-O-(1-carboxyvinyl)-alpha-D-glucosamine + NADPH + H(+). The protein operates within cell wall biogenesis; peptidoglycan biosynthesis. In terms of biological role, cell wall formation. In Clostridium botulinum (strain 657 / Type Ba4), this protein is UDP-N-acetylenolpyruvoylglucosamine reductase.